The primary structure comprises 703 residues: Elongation factor G 2 (703 aa).

One can recognise a tr-type G domain in the interval 8–291; it reads ELYRNIGIVA…AVIDYLPAPS (284 aa). GTP-binding positions include 17-24, 89-93, and 143-146; these read AHVDAGKT, DTPGH, and NKMD.

The protein belongs to the TRAFAC class translation factor GTPase superfamily. Classic translation factor GTPase family. EF-G/EF-2 subfamily.

It is found in the cytoplasm. Functionally, catalyzes the GTP-dependent ribosomal translocation step during translation elongation. During this step, the ribosome changes from the pre-translocational (PRE) to the post-translocational (POST) state as the newly formed A-site-bound peptidyl-tRNA and P-site-bound deacylated tRNA move to the P and E sites, respectively. Catalyzes the coordinated movement of the two tRNA molecules, the mRNA and conformational changes in the ribosome. The sequence is that of Elongation factor G 2 (fusB) from Pseudomonas putida (strain ATCC 47054 / DSM 6125 / CFBP 8728 / NCIMB 11950 / KT2440).